The primary structure comprises 775 residues: Melanoma-associated antigen D1 (775 aa).

The segment at 37–330 (SEAPPTSQAT…PARQTPSAWQ (294 aa)) is disordered. Low complexity predominate over residues 39–50 (APPTSQATAAAS). 7 stretches are compositionally biased toward polar residues: residues 52 to 63 (PNASPQSSQPPT), 84 to 100 (KAQNATTKGPNDYSQAR), 107 to 120 (KNQSKAAFKSQNGT), 149 to 178 (GQNSTKAGPGTTYNFPQSPSANEMTNNQPK), 221 to 235 (AQTSADGSQTQNVES), 247 to 258 (VNNLNVEENNSG), and 296 to 308 (LAWQNPSGWQNQT). Tandem repeats lie at residues 292 to 297 (WQTPLA), 298 to 303 (WQNPSG), 304 to 309 (WQNQTA), 329 to 334 (WQNPVA), 335 to 340 (WQNPVI), 341 to 346 (WPNPVI), 347 to 352 (WQNPVI), 353 to 358 (WPNPIV), 359 to 364 (WPGPIV), 365 to 370 (WPNPMA), 371 to 376 (WQSTPG), 377 to 382 (WQSPPS), 383 to 388 (WQAPPS), 389 to 394 (WQSPQD), 395 to 400 (WQGPPD), 401 to 406 (WQVPPD), 407 to 412 (WSMPPD), 413 to 418 (WSFPSD), and 419 to 424 (WPFPPD). Residues 292–441 (WQTPLAWQNP…IPPDWQNLRP (150 aa)) are 22 X 6 AA tandem repeats of W-[PQ]-X-P-X-X. Over residues 309-326 (ARQTPPAARQSPPARQTP) the composition is skewed to low complexity. The disordered stretch occupies residues 374–409 (TPGWQSPPSWQAPPSWQSPQDWQGPPDWQVPPDWSM). Residues 375–406 (PGWQSPPSWQAPPSWQSPQDWQGPPDWQVPPD) are compositionally biased toward low complexity. The 20; approximate repeat unit spans residues 425–429 (WIPAD). 2 consecutive repeat copies span residues 430–435 (WPIPPD) and 436–441 (WQNLRP). The span at 437–452 (QNLRPSPNLRSSSNSR) shows a compositional bias: low complexity. Positions 437–463 (QNLRPSPNLRSSSNSRASQNQGPPQPR) are disordered. An MAGE domain is found at 468-666 (LQERANKLVK…RDWTAQFMEA (199 aa)).

Interacts with DLX5, DLX7 and MSX2 and forms homomultimers. Interacts with UNC5A. Interacts with TRIM28 and PJA1. Interacts with NGFR/p75NTR and RORA. In terms of tissue distribution, ubiquitously expressed in many adult tissues, except for the spleen. Expressed in osteoblastic and chondrogenic cell lines and also during embryonic development.

It is found in the nucleus. The protein resides in the cytoplasm. Its subcellular location is the cell membrane. Its function is as follows. Involved in the apoptotic response after nerve growth factor (NGF) binding in neuronal cells. Inhibits cell cycle progression, and facilitates NGFR-mediated apoptosis. May act as a regulator of the function of DLX family members. May enhance ubiquitin ligase activity of RING-type zinc finger-containing E3 ubiquitin-protein ligases. Proposed to act through recruitment and/or stabilization of the Ubl-conjugating enzyme (E2) at the E3:substrate complex. Plays a role in the circadian rhythm regulation. May act as RORA coregulator, modulating the expression of core clock genes such as BMAL1 and NFIL3, induced, or NR1D1, repressed. This chain is Melanoma-associated antigen D1 (Maged1), found in Mus musculus (Mouse).